The sequence spans 215 residues: Phosphatidylserine decarboxylase proenzyme (215 aa).

Serine 185 (schiff-base intermediate with substrate; via pyruvic acid) is an active-site residue. Serine 185 is subject to Pyruvic acid (Ser); by autocatalysis.

The protein belongs to the phosphatidylserine decarboxylase family. PSD-A subfamily. Heterodimer of a large membrane-associated beta subunit and a small pyruvoyl-containing alpha subunit. Pyruvate is required as a cofactor. In terms of processing, is synthesized initially as an inactive proenzyme. Formation of the active enzyme involves a self-maturation process in which the active site pyruvoyl group is generated from an internal serine residue via an autocatalytic post-translational modification. Two non-identical subunits are generated from the proenzyme in this reaction, and the pyruvate is formed at the N-terminus of the alpha chain, which is derived from the carboxyl end of the proenzyme. The post-translation cleavage follows an unusual pathway, termed non-hydrolytic serinolysis, in which the side chain hydroxyl group of the serine supplies its oxygen atom to form the C-terminus of the beta chain, while the remainder of the serine residue undergoes an oxidative deamination to produce ammonia and the pyruvoyl prosthetic group on the alpha chain.

The protein resides in the cell membrane. The catalysed reaction is a 1,2-diacyl-sn-glycero-3-phospho-L-serine + H(+) = a 1,2-diacyl-sn-glycero-3-phosphoethanolamine + CO2. The protein operates within phospholipid metabolism; phosphatidylethanolamine biosynthesis; phosphatidylethanolamine from CDP-diacylglycerol: step 2/2. Catalyzes the formation of phosphatidylethanolamine (PtdEtn) from phosphatidylserine (PtdSer). The sequence is that of Phosphatidylserine decarboxylase proenzyme from Streptomyces avermitilis (strain ATCC 31267 / DSM 46492 / JCM 5070 / NBRC 14893 / NCIMB 12804 / NRRL 8165 / MA-4680).